A 229-amino-acid chain; its full sequence is Rhamnosyl O-methyltransferase (229 aa).

An N-terminal signal peptide occupies residues Met1–Ala23.

This sequence belongs to the rhamnosyl O-methyltransferase family.

Catalyzes the O-methylation of the hydroxyl group located on C-2 of the first rhamnosyl residue linked to the phenolic group of glycosylated phenolphthiocerol dimycocerosates (PGL) and p-hydroxybenzoic acid derivatives (p-HBAD). The polypeptide is Rhamnosyl O-methyltransferase (Mycobacterium leprae (strain TN)).